Here is a 164-residue protein sequence, read N- to C-terminus: Telomerase-associated protein of 19 kDa (164 aa).

As to quaternary structure, component of the telomerase holoenzyme complex, composed of the catalytic core (the catalytic subunit TERT, the telomerase RNA template component TER and TAP65/p65), which is associated with two heterotrimeric subcomplexes: (i) the replication protein A (RPA)-related subcomplex, composed of TEB1, RPA2/TEB2 and RPA3/TEB3 and (ii) the CST-like subcomplex, composed of TAP75/p75, TAP45/p45 and TAP19/p19. TEB1 and the CST-like subcomplex are tethered to the catalytic core by TAP50/p50.

It localises to the chromosome. It is found in the telomere. In terms of biological role, component of a CST-like subcomplex of the holoenzyme telomerase ribonucleoprotein complex, which stimulates telomerase complementary-strand synthesis. Telomerase is an essential ribonucleoprotein enzyme that copies new telomeric repeats onto chromosome ends by repetitively synthesizing the short telomere-repeat sequence 5'-TTGGGG-3' using an RNA template component TER. The CST-like subcomplex (also named 7-4-1) binds telomeric single-stranded DNA and coordinates telomere G-strand and C-strand synthesis. The sequence is that of Telomerase-associated protein of 19 kDa from Tetrahymena thermophila (strain SB210).